Reading from the N-terminus, the 525-residue chain is MNDFWQHCSALLERELTPQQYVTWIKPLAPVAFDASANTLSIAAPNRFKLDWVKSQFSGRIADLAREFWNTPIEVQFVLDPKAGMRGAPAGVAPAAPRMPLTPNGPAAAVAAIAANLTAHASAAPSAPADVPLTPSAAAAHHLHGDDADIDLPSLPAHEAAAGRRTWRPGPGAAPANGAEADSMYERSKLNPVLTFDNFVTGKANQLARAAAIQVAHNPGISYNPLFLYGGVGLGKTHLIHAIGNQLLLDKAGARIRYIHAEQYVSDVVKAYQRKAFDDFKRYYHSLDLLLIDDIQFFSGKSRTQEEFFYAFEALVANKAQVIITSDTYPKEISGIDDRLISRFDSGLTVAIEPPELEMRVAILMRKAQSEGVNLSEDVAFFVAKHLRSNVRELEGALRKILAYSKFHGREISIELTKEALKDLLTVQNRQISVENIQKTVADFYNIKVADMYSKKRPANIARPRQIAMYLAKELTQKSLPEIGELFGGRDHTTVLHAVRKIADERGKDAQLNHELHVLEQTLKG.

Residues 1 to 71 are domain I, interacts with DnaA modulators; the sequence is MNDFWQHCSA…ADLAREFWNT (71 aa). The segment at 71-188 is domain II; it reads TPIEVQFVLD…AEADSMYERS (118 aa). The disordered stretch occupies residues 160–181; it reads AAAGRRTWRPGPGAAPANGAEA. The span at 169 to 181 shows a compositional bias: low complexity; sequence PGPGAAPANGAEA. Residues 189 to 405 are domain III, AAA+ region; sequence KLNPVLTFDN…GALRKILAYS (217 aa). ATP contacts are provided by G233, G235, K236, and T237. Residues 406–525 form a domain IV, binds dsDNA region; sequence KFHGREISIE…LHVLEQTLKG (120 aa).

This sequence belongs to the DnaA family. As to quaternary structure, oligomerizes as a right-handed, spiral filament on DNA at oriC.

It localises to the cytoplasm. Plays an essential role in the initiation and regulation of chromosomal replication. ATP-DnaA binds to the origin of replication (oriC) to initiate formation of the DNA replication initiation complex once per cell cycle. Binds the DnaA box (a 9 base pair repeat at the origin) and separates the double-stranded (ds)DNA. Forms a right-handed helical filament on oriC DNA; dsDNA binds to the exterior of the filament while single-stranded (ss)DNA is stabiized in the filament's interior. The ATP-DnaA-oriC complex binds and stabilizes one strand of the AT-rich DNA unwinding element (DUE), permitting loading of DNA polymerase. After initiation quickly degrades to an ADP-DnaA complex that is not apt for DNA replication. Binds acidic phospholipids. This is Chromosomal replication initiator protein DnaA from Burkholderia vietnamiensis (strain G4 / LMG 22486) (Burkholderia cepacia (strain R1808)).